The chain runs to 91 residues: UPF0250 protein PP_4802 (91 aa).

This sequence belongs to the UPF0250 family.

This chain is UPF0250 protein PP_4802, found in Pseudomonas putida (strain ATCC 47054 / DSM 6125 / CFBP 8728 / NCIMB 11950 / KT2440).